The following is an 88-amino-acid chain: Putative membrane protein insertion efficiency factor (88 aa).

The interval 68–88 (VPPPNSDTRARGEADARSHRL) is disordered. Residues 75-88 (TRARGEADARSHRL) are compositionally biased toward basic and acidic residues.

It belongs to the UPF0161 family.

Its subcellular location is the cell inner membrane. Could be involved in insertion of integral membrane proteins into the membrane. This is Putative membrane protein insertion efficiency factor from Burkholderia cenocepacia (strain ATCC BAA-245 / DSM 16553 / LMG 16656 / NCTC 13227 / J2315 / CF5610) (Burkholderia cepacia (strain J2315)).